A 227-amino-acid polypeptide reads, in one-letter code: PKHD-type hydroxylase Caul_0045 (227 aa).

The 101-residue stretch at 78 to 178 (TILSPLFNRY…RTASFFWIQS (101 aa)) folds into the Fe2OG dioxygenase domain. Fe cation-binding residues include His96, Asp98, and His159. Residue Arg169 participates in 2-oxoglutarate binding.

Fe(2+) is required as a cofactor. It depends on L-ascorbate as a cofactor.

The sequence is that of PKHD-type hydroxylase Caul_0045 from Caulobacter sp. (strain K31).